Here is a 205-residue protein sequence, read N- to C-terminus: Ribosome maturation factor RimP (205 aa).

Polar residues predominate over residues 1–13 (MSNAEATTSSDRT). Residues 1–27 (MSNAEATTSSDRTGTGKAEAESVHNPE) form a disordered region. The span at 18–27 (AEAESVHNPE) shows a compositional bias: basic and acidic residues.

It belongs to the RimP family.

It localises to the cytoplasm. Functionally, required for maturation of 30S ribosomal subunits. The polypeptide is Ribosome maturation factor RimP (Arthrobacter sp. (strain FB24)).